A 283-amino-acid chain; its full sequence is Probable endonuclease 4 (283 aa).

His-69, His-113, Glu-148, Asp-182, His-185, His-217, Asp-230, His-232, and Glu-262 together coordinate Zn(2+).

The protein belongs to the AP endonuclease 2 family. Requires Zn(2+) as cofactor.

The enzyme catalyses Endonucleolytic cleavage to 5'-phosphooligonucleotide end-products.. Endonuclease IV plays a role in DNA repair. It cleaves phosphodiester bonds at apurinic or apyrimidinic (AP) sites, generating a 3'-hydroxyl group and a 5'-terminal sugar phosphate. This chain is Probable endonuclease 4, found in Bifidobacterium longum (strain DJO10A).